We begin with the raw amino-acid sequence, 133 residues long: Helix-loop-helix protein 1 (133 aa).

The tract at residues 1–79 (MMLNSDTMEL…RRATAKYRTA (79 aa)) is disordered. Residues 25 to 45 (DCGGGAGPDGAGPGGPGGGQA) are compositionally biased toward gly residues. Basic and acidic residues predominate over residues 52 to 65 (EPGRKDLQHLSREE). The segment covering 66–79 (RRRRRRATAKYRTA) has biased composition (basic residues). One can recognise a bHLH domain in the interval 75 to 127 (KYRTAHATRERIRVEAFNLAFAELRKLLPTLPPDKKLSKIEILRLAICYISYL).

Efficient DNA binding requires dimerization with another bHLH protein.

It is found in the nucleus. Functionally, may serve as DNA-binding protein and may be involved in the control of cell-type determination, possibly within the developing nervous system. The chain is Helix-loop-helix protein 1 (NHLH1) from Homo sapiens (Human).